The primary structure comprises 356 residues: Heat-inducible transcription repressor HrcA (356 aa).

It belongs to the HrcA family.

Negative regulator of class I heat shock genes (grpE-dnaK-dnaJ and groELS operons). Prevents heat-shock induction of these operons. The polypeptide is Heat-inducible transcription repressor HrcA (Bartonella tribocorum (strain CIP 105476 / IBS 506)).